Here is a 257-residue protein sequence, read N- to C-terminus: Phosphate import ATP-binding protein PstB (257 aa).

The region spanning 5–246 is the ABC transporter domain; sequence LEIKDLTAFY…EVIFTSPKNE (242 aa). 37-44 contributes to the ATP binding site; it reads GPSGCGKS.

This sequence belongs to the ABC transporter superfamily. Phosphate importer (TC 3.A.1.7) family. In terms of assembly, the complex is composed of two ATP-binding proteins (PstB), two transmembrane proteins (PstC and PstA) and a solute-binding protein (PstS).

The protein resides in the cell membrane. It carries out the reaction phosphate(out) + ATP + H2O = ADP + 2 phosphate(in) + H(+). In terms of biological role, part of the ABC transporter complex PstSACB involved in phosphate import. Responsible for energy coupling to the transport system. This chain is Phosphate import ATP-binding protein PstB, found in Tropheryma whipplei (strain TW08/27) (Whipple's bacillus).